The sequence spans 311 residues: Urease accessory protein UreD (311 aa).

This sequence belongs to the UreD family. As to quaternary structure, ureD, UreF and UreG form a complex that acts as a GTP-hydrolysis-dependent molecular chaperone, activating the urease apoprotein by helping to assemble the nickel containing metallocenter of UreC. The UreE protein probably delivers the nickel.

It localises to the cytoplasm. Functionally, required for maturation of urease via the functional incorporation of the urease nickel metallocenter. The chain is Urease accessory protein UreD from Synechococcus sp. (strain CC9605).